Here is a 98-residue protein sequence, read N- to C-terminus: NADH-ubiquinone oxidoreductase chain 4L (98 aa).

A run of 3 helical transmembrane segments spans residues 1 to 21, 28 to 48, and 59 to 79; these read MMSI…GVLI, STLL…ALLI, and APLI…ALLV.

This sequence belongs to the complex I subunit 4L family. Core subunit of respiratory chain NADH dehydrogenase (Complex I) which is composed of 45 different subunits.

It localises to the mitochondrion inner membrane. The catalysed reaction is a ubiquinone + NADH + 5 H(+)(in) = a ubiquinol + NAD(+) + 4 H(+)(out). Functionally, core subunit of the mitochondrial membrane respiratory chain NADH dehydrogenase (Complex I) which catalyzes electron transfer from NADH through the respiratory chain, using ubiquinone as an electron acceptor. Part of the enzyme membrane arm which is embedded in the lipid bilayer and involved in proton translocation. In Osphranter robustus (Wallaroo), this protein is NADH-ubiquinone oxidoreductase chain 4L (MT-ND4L).